The following is a 286-amino-acid chain: CLA biosynthesis dehydrogenase/reductase (286 aa).

6 residues coordinate NAD(+): aspartate 37, aspartate 63, valine 64, asparagine 90, tyrosine 156, and lysine 160. Tyrosine 156 acts as the Proton acceptor in catalysis.

The protein belongs to the short-chain dehydrogenases/reductases (SDR) family.

It localises to the cytoplasm. The catalysed reaction is (10S)-hydroxy-(12Z)-octadecenoate + NAD(+) = 10-oxo-(12Z)-octadecenoate + NADH + H(+). It catalyses the reaction 10-oxo-(11E)-octadecenoate + NADH + H(+) = 10-hydroxy-(11E)-octadecenoate + NAD(+). The enzyme catalyses 10-oxooctadecanoate + NADH + H(+) = 10-hydroxyoctadecanoate + NAD(+). It functions in the pathway lipid metabolism; fatty acid metabolism. Its function is as follows. Is involved in a saturation metabolic pathway of polyunsaturated fatty acids, that detoxifies unsaturated fatty acids and generates hydroxy fatty acids, oxo fatty acids, conjugated fatty acids such as conjugated linoleic acids (CLAs), and partially saturated trans-fatty acids as intermediates. CLA-DH catalyzes the dehydrogenation/reduction steps in the production of 10-oxo-(12Z)-octadecenoate, 10-hydroxy-(11E)-octadecenoate and 10-hydroxyoctadecanoate during linoleate metabolism. As part of the gut microbiome, this enzyme modifies host fatty acid composition and is expected to improve human health by altering lipid metabolism related to the onset of metabolic syndrome. The chain is CLA biosynthesis dehydrogenase/reductase from Lactiplantibacillus plantarum (Lactobacillus plantarum).